Reading from the N-terminus, the 477-residue chain is Serine/threonine protein phosphatase 2A 55 kDa regulatory subunit B' delta isoform (477 aa).

The protein belongs to the phosphatase 2A regulatory subunit B56 family. As to quaternary structure, PP2A consists of a common heteromeric enzyme, composed of a catalytic subunit (subunits C), a constant regulatory subunit (subunit A), and a variety of regulatory subunits such as subunits B (the R2/B/PR55/B55, R3/B''/PR72/PR130/PR59 and R5/B'/B56 families). Interacts with SRK2E/OST1. In terms of tissue distribution, expressed ubiquitously.

It is found in the cytoplasm. The B regulatory subunit may modulate substrate selectivity and catalytic activity, and may also direct the localization of the catalytic enzyme to a particular subcellular compartment. This is Serine/threonine protein phosphatase 2A 55 kDa regulatory subunit B' delta isoform (B'DELTA) from Arabidopsis thaliana (Mouse-ear cress).